The following is a 427-amino-acid chain: Putative F-box protein At3g44060 (427 aa).

Residues 1–46 (MDCLPDDLLVQILYLLPTKEAVSTSVLSKRWRTLFTRSDNLDFHDP) form the F-box domain.

This is Putative F-box protein At3g44060 from Arabidopsis thaliana (Mouse-ear cress).